We begin with the raw amino-acid sequence, 2162 residues long: Polyketide synthase 1 (2162 aa).

The interval F19 to H264 is N-terminal acylcarrier protein transacylase domain (SAT). In terms of domain architecture, Ketosynthase family 3 (KS3) spans D397–D841. Active-site for beta-ketoacyl synthase activity residues include C578, H713, and H757. The tract at residues A941 to W1245 is malonyl-CoA:ACP transacylase (MAT) domain. The active-site For acyl/malonyl transferase activity is the S1030. A product template (PT) domain region spans residues T1322 to A1636. The tract at residues H1326 to A1459 is N-terminal hotdog fold. Residues H1326 to D1631 form the PKS/mFAS DH domain. The Proton acceptor; for dehydratase activity role is filled by H1358. The interval L1486–D1631 is C-terminal hotdog fold. The active-site Proton donor; for dehydratase activity is D1545. The interval A1633–Q1669 is disordered. Positions P1658–Q1669 are enriched in low complexity. A Carrier 1 domain is found at I1692–T1766. S1726 bears the O-(pantetheine 4'-phosphoryl)serine mark. Residues S1772 to S1783 are compositionally biased toward low complexity. A disordered region spans residues S1772–S1809. Positions S1794 to S1809 are enriched in polar residues. Residues S1807 to I1884 enclose the Carrier 2 domain. An O-(pantetheine 4'-phosphoryl)serine modification is found at S1844. Residues L1896–A2160 are thioesterase (TE) domain. S1987 serves as the catalytic For thioesterase activity.

Functionally, polyketide synthase; part of the Pks1 gene cluster that mediates the biosynthesis of an anthraquinone derivative pigment that contributes to conidial pigmentation that provides protection from UV radiation, heat and cold stress. The polyketide synthase Pks1 produces 1-acetyl-2,4,6,8-tetrahydroxy-9,10-anthraquinone though condensation of acetyl-CoA with malonyl-CoA. The dehydratase EthD and the laccase Mlac1 further convert the anthraquinone derivative into the final conidial pigment. This chain is Polyketide synthase 1, found in Metarhizium album (strain ARSEF 1941).